The following is a 304-amino-acid chain: Ornithine carbamoyltransferase (304 aa).

Carbamoyl phosphate is bound by residues 51–54 (STRT), glutamine 78, arginine 102, and 129–132 (HPVQ). Residues asparagine 157, aspartate 221, and 225–226 (SM) contribute to the L-ornithine site. Residues 261–262 (CL) and arginine 289 each bind carbamoyl phosphate.

It belongs to the aspartate/ornithine carbamoyltransferase superfamily. OTCase family.

The protein localises to the cytoplasm. The enzyme catalyses carbamoyl phosphate + L-ornithine = L-citrulline + phosphate + H(+). The protein operates within amino-acid degradation; L-arginine degradation via ADI pathway; carbamoyl phosphate from L-arginine: step 2/2. Functionally, reversibly catalyzes the transfer of the carbamoyl group from carbamoyl phosphate (CP) to the N(epsilon) atom of ornithine (ORN) to produce L-citrulline. The chain is Ornithine carbamoyltransferase from Campylobacter curvus (strain 525.92).